The sequence spans 399 residues: MAKEKFVRAKTHMNVGTIGHIDHGKTTLTAAITKALSYKGGADFTPFDMIDKAPEEKARGITINVSHVEYQTDKRHYAHIDCPGHADYIKNMITGAAQMDGAILVVAATDGVMPQTREHVLLARQVNVPALVVFINKVDMVDDEELIDLVEMEVRDLLNSYEFPGDEVPVIRGSALKALEEDNPDGPWTQKIYELMDAVDSYFPDPVREIDKPFLMPIEDIFSITGRGTVVTGRIERGVVHTGDQVEIIGLSYETKKTVVTGVEMFRKILDEGEAGDNVGCLLRGIEKDEVKRGQVLAAPGSITPHKKFKAEVYVLKKEEGGRHTPFTKGYRPQFYIRTADVTGTLVEFSSGAEMVMPGDNINMTVELIYPVALEEGMRFAIREGGRTVGAGVVTEIIE.

In terms of domain architecture, tr-type G spans 10–207 (KTHMNVGTIG…AVDSYFPDPV (198 aa)). A G1 region spans residues 19–26 (GHIDHGKT). 19 to 26 (GHIDHGKT) is a GTP binding site. Thr26 serves as a coordination point for Mg(2+). The interval 60–64 (GITIN) is G2. Residues 81 to 84 (DCPG) form a G3 region. Residues 81 to 85 (DCPGH) and 136 to 139 (NKVD) contribute to the GTP site. Positions 136-139 (NKVD) are G4. A G5 region spans residues 174 to 176 (SAL).

The protein belongs to the TRAFAC class translation factor GTPase superfamily. Classic translation factor GTPase family. EF-Tu/EF-1A subfamily. In terms of assembly, monomer.

Its subcellular location is the cytoplasm. It carries out the reaction GTP + H2O = GDP + phosphate + H(+). GTP hydrolase that promotes the GTP-dependent binding of aminoacyl-tRNA to the A-site of ribosomes during protein biosynthesis. The polypeptide is Elongation factor Tu (Petrotoga mobilis (strain DSM 10674 / SJ95)).